The following is a 194-amino-acid chain: MNKFLIALLVLATLAVSFSQEIGVSILKTDTPKGECKGKTASIGDYISLKYVGKFEDGTVFDSSEIHGGFSFNFTIGERKVIPGLEIGTINICEGEKRSIKIPYQLAYGENGIENAIPPRTDIYFDLEVVSIEGAPAQPFYYQLIPSVGTIIAFSMLAGFIVLVKFIIKRYPDESNSKKPAPGKPKKTKAAKQN.

Residues 1-19 (MNKFLIALLVLATLAVSFS) form the signal peptide. One can recognise a PPIase FKBP-type domain in the interval 44–133 (GDYISLKYVG…YFDLEVVSIE (90 aa)). The chain crosses the membrane as a helical span at residues 148-168 (VGTIIAFSMLAGFIVLVKFII). A disordered region spans residues 173–194 (DESNSKKPAPGKPKKTKAAKQN). A compositionally biased stretch (basic residues) spans 184–194 (KPKKTKAAKQN).

Belongs to the FKBP-type PPIase family.

It is found in the membrane. The enzyme catalyses [protein]-peptidylproline (omega=180) = [protein]-peptidylproline (omega=0). With respect to regulation, inhibited by both FK506 and rapamycin. Functionally, PPIases accelerate the folding of proteins by catalyzing the cis-trans isomerization of proline imidic peptide bonds in oligopeptides. The protein is FK506-binding protein 3 (fkbp3) of Dictyostelium discoideum (Social amoeba).